Reading from the N-terminus, the 225-residue chain is Small ribosomal subunit protein uS3 (225 aa).

Positions L38–R106 constitute a KH type-2 domain.

Belongs to the universal ribosomal protein uS3 family. In terms of assembly, part of the 30S ribosomal subunit. Forms a tight complex with proteins S10 and S14.

Its function is as follows. Binds the lower part of the 30S subunit head. Binds mRNA in the 70S ribosome, positioning it for translation. The chain is Small ribosomal subunit protein uS3 from Gluconobacter oxydans (strain 621H) (Gluconobacter suboxydans).